Consider the following 115-residue polypeptide: ATP synthase subunit g, mitochondrial (115 aa).

Met-1 is modified (N-acetylmethionine). Residues Ser-3 and Ser-62 each carry the phosphoserine modification.

It belongs to the ATPase g subunit family. As to quaternary structure, F-type ATPases have 2 components, CF(1) - the catalytic core - and CF(0) - the membrane proton channel. In yeast, the dimeric form of ATP synthase consists of 17 polypeptides: alpha, beta, gamma, delta, epsilon, 4 (B), 5 (OSCP), 6 (A), 8, 9 (C), d, E (Tim11), f, g, h, i/j and k. Post-translationally, phosphorylation on Ser-62 impairs ATP synthase dimerization.

It is found in the mitochondrion membrane. In terms of biological role, mitochondrial membrane ATP synthase (F(1)F(0) ATP synthase or Complex V) produces ATP from ADP in the presence of a proton gradient across the membrane which is generated by electron transport complexes of the respiratory chain. F-type ATPases consist of two structural domains, F(1) - containing the extramembraneous catalytic core, and F(0) - containing the membrane proton channel, linked together by a central stalk and a peripheral stalk. During catalysis, ATP synthesis in the catalytic domain of F(1) is coupled via a rotary mechanism of the central stalk subunits to proton translocation. Part of the complex F(0) domain. Minor subunit located with subunit a in the membrane. The polypeptide is ATP synthase subunit g, mitochondrial (ATP20) (Saccharomyces cerevisiae (strain ATCC 204508 / S288c) (Baker's yeast)).